The following is a 140-amino-acid chain: ATP synthase epsilon chain, chloroplastic (140 aa).

The protein belongs to the ATPase epsilon chain family. In terms of assembly, F-type ATPases have 2 components, CF(1) - the catalytic core - and CF(0) - the membrane proton channel. CF(1) has five subunits: alpha(3), beta(3), gamma(1), delta(1), epsilon(1). CF(0) has three main subunits: a, b and c.

It localises to the plastid. The protein localises to the chloroplast thylakoid membrane. In terms of biological role, produces ATP from ADP in the presence of a proton gradient across the membrane. In Panax ginseng (Korean ginseng), this protein is ATP synthase epsilon chain, chloroplastic.